A 923-amino-acid polypeptide reads, in one-letter code: MLWRGSQALRHFSTSRVYFKNKLKLALIGQSLFGQEVYSQLLKEGHRVVGVFTVPDKDGKADPLALAAEKDGTPVFKFPRWRLKGKTIKEVAEAYQSVGAELNVLPFCTQFIPMDVIDSPKHGSIIYHPSLLPRHRGASAINWTLIMGDKKAGFSVFWADDGLDTGPILLQRSCDVKPNDTVDSLYNRFLFPEGIKAMVEAVQLIADGKAPRTPQPEEGATYEGIQKKENAEVSWDQPAEGLHNWIRGHDKVPGAWAEINGQMVTFYGSSLLTSSVPSGEPLDIRGAKKPGLVTKNGLVLFGNDGKALMVRNLQFEDGKMIPASQYFSAGETSVVELTAEELKVAETIKVIWARILSNTPVIEDSTDFFKSGASSMDVVRLVEEIRQSCGGLQLQNEDVYMATKFGDFIQKVVRRLRGEDEEAEMVVDYVSKEVNGMTVKIPYQCFINGQFVDAEDGETYATVNPTDGTTICRVSYASLADVDRAVAAAKDAFENGEWGRMNARDRGRLMYRLADLMEENQEELATIEALDSGAVYTLALKTHIGMSVQTFRYFAGWCDKIQGSTIPINQARPNYNLTFTKKEPLGACAIIIPWNYPLMMLAWKSAACLAAGNTLVLKPAQVTPLTALKFAELTVKAGFPKGVINIIPGSGGVAGQRLSQHPDIRKLGFTGSTSVGKQIMKSCAVSNLKKVSLELGGKSPLIIFSDCDLEKAVRMGMGAVFFNKGENCIAAGRLFVEEAIHDEFVTRVVEEIKKMKIGDPLDRSTDHGPQNHRAHLEKLLQYCETGVQEGATLVYGGRQVQRPGFFMEPTVFTGVEDHMYLAKEESFGPIMVISKFQNGDIDGVLQRANNTEYGLASGVFTRDINKAMYVSDKLEAGTVFINTYNKTDVAAPFGGMKQSGFGKDLGEEALNEYLKIKTVTLEY.

The transit peptide at 1 to 19 directs the protein to the mitochondrion; not cleaved; the sequence is MLWRGSQALRHFSTSRVYF. A hydrolase domain region spans residues 23-331; sequence LKLALIGQSL…PASQYFSAGE (309 aa). The residue at position 31 (serine 31) is a Phosphoserine. Lysine 60 bears the N6-succinyllysine mark. (6R)-10-formyltetrahydrofolate is bound at residue 110-112; it reads QFI. The Proton donor role is filled by histidine 128. Aspartate 164 lines the (6R)-10-formyltetrahydrofolate pocket. The Carrier domain occupies 339–416; that stretch reads AEELKVAETI…DFIQKVVRRL (78 aa). Residue serine 375 is modified to O-(pantetheine 4'-phosphoryl)serine. The segment at 438-923 is aldehyde dehydrogenase domain; that stretch reads TVKIPYQCFI…LKIKTVTLEY (486 aa). Residues 592-594 and 618-621 each bind NADP(+); these read IPW and KPAQ. At serine 650 the chain carries Phosphoserine. NADP(+)-binding positions include 651-656 and 671-672; these read GGVAGQ and GS. Residue lysine 681 is modified to N6-succinyllysine. Glutamate 694 functions as the Proton acceptor in the catalytic mechanism. An NADP(+)-binding site is contributed by 694–695; the sequence is EL. Cysteine 728 acts as the Proton donor in catalysis. NADP(+) is bound by residues lysine 778 and 825–827; that span reads ESF. At lysine 903 the chain carries N6-acetyllysine.

It in the N-terminal section; belongs to the GART family. The protein in the C-terminal section; belongs to the aldehyde dehydrogenase family. ALDH1L subfamily. In terms of processing, phosphopantetheinylation at Ser-375 by AASDHPPT is required for the formyltetrahydrofolate dehydrogenase activity.

The protein resides in the mitochondrion. The catalysed reaction is (6R)-10-formyltetrahydrofolate + NADP(+) + H2O = (6S)-5,6,7,8-tetrahydrofolate + CO2 + NADPH + H(+). Functionally, mitochondrial 10-formyltetrahydrofolate dehydrogenase that catalyzes the NADP(+)-dependent conversion of 10-formyltetrahydrofolate to tetrahydrofolate and carbon dioxide. The chain is Mitochondrial 10-formyltetrahydrofolate dehydrogenase from Mus musculus (Mouse).